A 407-amino-acid chain; its full sequence is Monooxygenase 2 (407 aa).

It belongs to the 3-hydroxybenzoate 6-hydroxylase family. Monomer. FAD serves as cofactor. As to expression, expressed in seeds, seedlings, roots, leaves, flowers, pollen and siliques.

The polypeptide is Monooxygenase 2 (Arabidopsis thaliana (Mouse-ear cress)).